The chain runs to 117 residues: Immunoglobulin kappa variable 1D-16 (117 aa).

An N-terminal signal peptide occupies residues 1 to 22; it reads MDMRVLAQLLGLLLLCFPGARC. Residues 23–45 form a framework-1 region; it reads DIQMTQSPSSLSASVGDRVTITC. The Ig-like domain occupies 24–117; that stretch reads IQMTQSPSSL…YYCQQYNSYP (94 aa). Cysteines 45 and 110 form a disulfide. A complementarity-determining-1 region spans residues 46 to 56; that stretch reads RASQGISSWLA. The interval 57–71 is framework-2; that stretch reads WYQQKPEKAPKSLIY. The segment at 72-78 is complementarity-determining-2; it reads AASSLQS. Residues 79–110 form a framework-3 region; that stretch reads GVPSRFSGSGSGTDFTLTISSLQPEDFATYYC. The complementarity-determining-3 stretch occupies residues 111-117; sequence QQYNSYP.

As to quaternary structure, immunoglobulins are composed of two identical heavy chains and two identical light chains; disulfide-linked.

The protein localises to the secreted. Its subcellular location is the cell membrane. Functionally, v region of the variable domain of immunoglobulin light chains that participates in the antigen recognition. Immunoglobulins, also known as antibodies, are membrane-bound or secreted glycoproteins produced by B lymphocytes. In the recognition phase of humoral immunity, the membrane-bound immunoglobulins serve as receptors which, upon binding of a specific antigen, trigger the clonal expansion and differentiation of B lymphocytes into immunoglobulins-secreting plasma cells. Secreted immunoglobulins mediate the effector phase of humoral immunity, which results in the elimination of bound antigens. The antigen binding site is formed by the variable domain of one heavy chain, together with that of its associated light chain. Thus, each immunoglobulin has two antigen binding sites with remarkable affinity for a particular antigen. The variable domains are assembled by a process called V-(D)-J rearrangement and can then be subjected to somatic hypermutations which, after exposure to antigen and selection, allow affinity maturation for a particular antigen. This Homo sapiens (Human) protein is Immunoglobulin kappa variable 1D-16.